Consider the following 269-residue polypeptide: Malonyl-[acyl-carrier protein] O-methyltransferase (269 aa).

Belongs to the methyltransferase superfamily.

The catalysed reaction is malonyl-[ACP] + S-adenosyl-L-methionine = malonyl-[ACP] methyl ester + S-adenosyl-L-homocysteine. The protein operates within cofactor biosynthesis; biotin biosynthesis. In terms of biological role, converts the free carboxyl group of a malonyl-thioester to its methyl ester by transfer of a methyl group from S-adenosyl-L-methionine (SAM). It allows to synthesize pimeloyl-ACP via the fatty acid synthetic pathway. The chain is Malonyl-[acyl-carrier protein] O-methyltransferase from Bacillus anthracis.